Consider the following 458-residue polypeptide: MSTEGGFGGTSSSDAQQSLQSFWPRVMEEIRNLTVKDFRVQELPLARIKKIMKLDEDVKMISAEAPVLFAKAAQIFITELTLRAWIHTEDNKRRTLQRNDIAMAITKFDQFDFLIDIVPRDELKPPKRQEEVRQSVTPAEPVQYYFTLAQQPTAVQVQGQQQGQQTTSSTTTIQPGQIIIAQPQQGQTTPVTMQVGEGQQVQIVQAQPQGQAQQAQSGTGQTMQVMQQIITNTGEIQQIPVQLNAGQLQYIRLAQPVSGTQVVQGQIQTLATNAQQGQRNASQGKPRRCLKETLQITQTEVQQGQQQFSQFTDGQRNSVQQARVSELTGEAEPREVKATGNSTPCTSSLPTTHPPSHRAGASCVCCSQPQQSSTSPPPSDALQWVVVEVSGTPNQLETHRELHAPLPGMTSLSPLHPSQQLYQIQQVTMPAGQDLAQPMFIQSANQPSDGQAPQVTGD.

The segment covering 305–315 has biased composition (low complexity); that stretch reads QQQFSQFTDGQ. The tract at residues 305 to 379 is disordered; the sequence is QQQFSQFTDG…QQSSTSPPPS (75 aa). Residues 339-351 show a composition bias toward polar residues; the sequence is TGNSTPCTSSLPT.

The protein belongs to the NFYC/HAP5 subunit family. In terms of assembly, heterotrimeric transcription factor composed of three components, NF-YA, NF-YB and NF-YC. NF-YB and NF-YC must interact and dimerize for NF-YA association and DNA binding.

The protein resides in the nucleus. In terms of biological role, component of the sequence-specific heterotrimeric transcription factor (NF-Y) which specifically recognizes a 5'-CCAAT-3' box motif found in the promoters of its target genes. NF-Y can function as both an activator and a repressor, depending on its interacting cofactors. The chain is Nuclear transcription factor Y subunit gamma (NFYC) from Homo sapiens (Human).